Here is a 357-residue protein sequence, read N- to C-terminus: GTPase Obg (357 aa).

Residues 1-159 (MKFVDEAEIQ…RTLKLELKLL (159 aa)) form the Obg domain. Residues 160 to 343 (ADIGMLGFPN…IMKSAMTLFE (184 aa)) enclose the OBG-type G domain. GTP is bound by residues 166–173 (GFPNVGKS), 191–195 (FTTLY), 213–216 (DVPG), 293–296 (NKAD), and 324–326 (SAV). 2 residues coordinate Mg(2+): Ser173 and Thr193.

This sequence belongs to the TRAFAC class OBG-HflX-like GTPase superfamily. OBG GTPase family. In terms of assembly, monomer. Mg(2+) serves as cofactor.

It is found in the cytoplasm. Its function is as follows. An essential GTPase which binds GTP, GDP and possibly (p)ppGpp with moderate affinity, with high nucleotide exchange rates and a fairly low GTP hydrolysis rate. Plays a role in control of the cell cycle, stress response, ribosome biogenesis and in those bacteria that undergo differentiation, in morphogenesis control. The chain is GTPase Obg from Xylella fastidiosa (strain M23).